The sequence spans 382 residues: MDNLFTFLHEIEDRYARTIFNFHLISCDEIGDIYGLMKERISSEDMFDNIVYNKDIHPAIKKLVYCDIQLTKHIINQNTYPVFNDSSQVKCCHYFDINSNNSNISSRTVEIFESEKSSLVSYIKTTNKKRKVNYGEIKKTVHGGTNANYFSGKKSDEYLSTTVRSNINQPWIKTISKRMRVDIINHSIVTRGKSSILQTIEIIFTNRTCVKIFKDSTMHIILSKDKDEKGCINMIDKLFYVYYNLFLLFEDIIQNDYFKEVANVVNHVLMATALDEKLFLIKKMAEHDVYGVSNFKIGMFNLTFIKSLDHTVFPSLLDEDSKIKFFKGKKLNIVALRSLEDCTNYVTKSENMIEMMKERSTILNSIDIETESVDRLKELLLK.

Belongs to the orthopoxvirus OPG150 family. In terms of assembly, heterodimerizes with protein A8 to form the virus intermediate transcription factor (VITF)-3.

Functionally, acts with RNA polymerase to initiate transcription from intermediate gene promoters. This Cynomys gunnisoni (Gunnison's prairie dog) protein is Intermediate transcription factor 3 large subunit (OPG150).